A 203-amino-acid polypeptide reads, in one-letter code: NADH-quinone oxidoreductase subunit C (203 aa).

This sequence belongs to the complex I 30 kDa subunit family. In terms of assembly, NDH-1 is composed of 14 different subunits. Subunits NuoB, C, D, E, F, and G constitute the peripheral sector of the complex.

The protein resides in the cell inner membrane. It carries out the reaction a quinone + NADH + 5 H(+)(in) = a quinol + NAD(+) + 4 H(+)(out). In terms of biological role, NDH-1 shuttles electrons from NADH, via FMN and iron-sulfur (Fe-S) centers, to quinones in the respiratory chain. The immediate electron acceptor for the enzyme in this species is believed to be ubiquinone. Couples the redox reaction to proton translocation (for every two electrons transferred, four hydrogen ions are translocated across the cytoplasmic membrane), and thus conserves the redox energy in a proton gradient. The sequence is that of NADH-quinone oxidoreductase subunit C from Polaromonas sp. (strain JS666 / ATCC BAA-500).